Consider the following 400-residue polypeptide: 8-amino-7-oxononanoate synthase (400 aa).

R21 serves as a coordination point for substrate. Position 112 to 113 (112 to 113 (GY)) interacts with pyridoxal 5'-phosphate. Substrate is bound at residue H137. Positions 183, 211, and 239 each coordinate pyridoxal 5'-phosphate. The residue at position 242 (K242) is an N6-(pyridoxal phosphate)lysine. A substrate-binding site is contributed by T358.

Belongs to the class-II pyridoxal-phosphate-dependent aminotransferase family. BioF subfamily. In terms of assembly, homodimer. Pyridoxal 5'-phosphate is required as a cofactor.

It catalyses the reaction 6-carboxyhexanoyl-[ACP] + L-alanine + H(+) = (8S)-8-amino-7-oxononanoate + holo-[ACP] + CO2. The protein operates within cofactor biosynthesis; biotin biosynthesis. Catalyzes the decarboxylative condensation of pimeloyl-[acyl-carrier protein] and L-alanine to produce 8-amino-7-oxononanoate (AON), [acyl-carrier protein], and carbon dioxide. The protein is 8-amino-7-oxononanoate synthase of Burkholderia lata (strain ATCC 17760 / DSM 23089 / LMG 22485 / NCIMB 9086 / R18194 / 383).